The sequence spans 1042 residues: Probable serine/threonine protein kinase IRE4 (1042 aa).

Basic and acidic residues-rich tracts occupy residues 1 to 10, 102 to 115, and 314 to 327; these read MAEENRKDRG, EEIKLRGKNSGKDE, and QRNEAGQKFKRRDK. Disordered stretches follow at residues 1–75, 90–115, and 297–327; these read MAEE…GTKL, PPKYACSSTTSSEEIKLRGKNSGKDE, and WGSTPRVDDSGSGYPEYQRNEAGQKFKRRDK. The C2H2-type; atypical zinc finger occupies 402 to 421; the sequence is CRICEEEVPLFHLEPHSYIC. Residues 670 to 955 form the Protein kinase domain; sequence FEIIKPISRG…AAEVKSHPFF (286 aa). ATP-binding positions include 676 to 684 and K699; that span reads ISRGAFGKV. D793 acts as the Proton acceptor in catalysis. The segment at 830 to 850 is disordered; sequence ESDVSPRTNSHHFQKNQEEER. S854 is subject to Phosphoserine. The AGC-kinase C-terminal domain occupies 956-1042; sequence QGVDWENLAL…KLFFLLLCVF (87 aa).

Belongs to the protein kinase superfamily. AGC Ser/Thr protein kinase family.

It catalyses the reaction L-seryl-[protein] + ATP = O-phospho-L-seryl-[protein] + ADP + H(+). The enzyme catalyses L-threonyl-[protein] + ATP = O-phospho-L-threonyl-[protein] + ADP + H(+). The sequence is that of Probable serine/threonine protein kinase IRE4 from Arabidopsis thaliana (Mouse-ear cress).